Consider the following 466-residue polypeptide: GATA-binding factor 2 (466 aa).

2 stretches are compositionally biased toward low complexity: residues 139 to 155 (GSST…TPAS) and 174 to 188 (PDPN…SSSA). The disordered stretch occupies residues 139-196 (GSSTSSTASVSSLTPASHSGSHLFGFPPTPPKEVSPDPNSTSAASPSSSAGARQEDKD). GATA-type zinc fingers lie at residues 281–305 (CVNC…CNAC) and 335–359 (CANC…CNAC). A disordered region spans residues 436 to 466 (GHILPTPTPIHPSSSISFGHPHPSSMVTAMG).

In terms of tissue distribution, expressed in all developmental stages of erythroid cells but is additionally found in a limited subset of other tissues.

The protein resides in the nucleus. In terms of biological role, transcriptional activator which probably serves as a general switch factor for cell-specific development. It binds to DNA sites with the consensus sequence 5'-[AT]GATA[AG]-3' within regulatory regions of genes. This is GATA-binding factor 2 (GATA2) from Gallus gallus (Chicken).